Consider the following 533-residue polypeptide: MAFRRVLTTVILFCYLLISSQSIEFKNSQKPHKIQGPIKTIVVVVMENRSFDHILGWLKSTRPEIDGLTGKESNPLNVSDPNSKKIFVSDDAVFVDMDPGHSFQAIREQIFGSNDTSGDPKMNGFAQQSESMEPGMAKNVMSGFKPEVLPVYTELANEFGVFDRWFASVPTSTQPNRFYVHSATSHGCSSNVKKDLVKGFPQKTIFDSLDENGLSFGIYYQNIPATFFFKSLRRLKHLVKFHSYALKFKLDAKLGKLPNYSVVEQRYFDIDLFPANDDHPSHDVAAGQRFVKEVYETLRSSPQWKEMALLITYDEHGGFYDHVPTPVKGVPNPDGIIGPDPFYFGFDRLGVRVPTFLISPWIEKGTVIHEPEGPTPHSQFEHSSIPATVKKLFNLKSHFLTKRDAWAGTFEKYFRIRDSPRQDCPEKLPEVKLSLRPWGAKEDSKLSEFQVELIQLASQLVGDHLLNSYPDIGKNMTVSEGNKYAEDAVQKFLEAGMAALEAGADENTIVTMRPSLTTRTSPSEGTNKYIGSY.

The signal sequence occupies residues 1–22 (MAFRRVLTTVILFCYLLISSQS).

The protein belongs to the bacterial phospholipase C family. As to expression, expressed in roots, leaves, stems, flowers and siliques.

The protein resides in the secreted. This is Non-specific phospholipase C1 (NPC1) from Arabidopsis thaliana (Mouse-ear cress).